The chain runs to 448 residues: Porin AaxA (448 aa).

A signal peptide spans 1-24; it reads MASFRSSLLSALCAYGMMVMPAYA.

This sequence belongs to the OprB family.

It is found in the cell outer membrane. Functionally, facilitates L-arginine uptake, as part of the AaxABC system. The arginine uptake by the bacterium in the macrophage may be a virulence factor against the host innate immune response. The polypeptide is Porin AaxA (aaxA) (Chlamydia abortus (strain DSM 27085 / S26/3) (Chlamydophila abortus)).